Reading from the N-terminus, the 318-residue chain is SPX domain-containing protein 4 (318 aa).

One can recognise an SPX domain in the interval 1 to 187 (MKFGKEFRTH…GGLLRLPFTQ (187 aa)). Residues 226–237 (SAVQAHSSSHQH) are compositionally biased toward low complexity. Disordered regions lie at residues 226 to 247 (SAVQ…AETS) and 284 to 318 (SSLL…GPSH). Residues 305-318 (NKDDSEKEDTGPSH) show a composition bias toward basic and acidic residues.

The sequence is that of SPX domain-containing protein 4 (SPX4) from Arabidopsis thaliana (Mouse-ear cress).